We begin with the raw amino-acid sequence, 201 residues long: Large ribosomal subunit protein uL4 (201 aa).

Residues 45–66 form a disordered region; sequence AQLTRSEVSGGGKKPWRQKGTG.

It belongs to the universal ribosomal protein uL4 family. As to quaternary structure, part of the 50S ribosomal subunit.

In terms of biological role, one of the primary rRNA binding proteins, this protein initially binds near the 5'-end of the 23S rRNA. It is important during the early stages of 50S assembly. It makes multiple contacts with different domains of the 23S rRNA in the assembled 50S subunit and ribosome. Functionally, forms part of the polypeptide exit tunnel. This chain is Large ribosomal subunit protein uL4, found in Aeromonas hydrophila subsp. hydrophila (strain ATCC 7966 / DSM 30187 / BCRC 13018 / CCUG 14551 / JCM 1027 / KCTC 2358 / NCIMB 9240 / NCTC 8049).